Consider the following 159-residue polypeptide: uncharacterized protein (159 aa).

Residues 4 to 24 form a helical membrane-spanning segment; that stretch reads QIALILSLIILIFFIYKFAMF.

The protein resides in the membrane. This is an uncharacterized protein from Acheta domesticus (House cricket).